The chain runs to 341 residues: MTIQEELEATKQQFCIELNQVNSSKDLFDLKVRYLGKKGLFRCFADKLRECPLDQKALMGASINECKTYIEEQIREKNDSILLAEESAEFLKEKIDITLPGESHCPGGKHIVKKVLDDVVDIFICLGFCVREAPNIESEENNFSLLNFEEDHPARQMHDTFYLDGKTVLRTHTSNVQVRELSKGQPPIKVVAPGLCFRNEDISARSHVIFHQVEAFYLDRDVTLSDLTEMLTEFYHTFFKRKIELRLRHSYFPFVEPGIEVDVSCECRGSGCSLCKHTGWLEVAGAGMIHPQVLRNSGIDPEIYTGYAVGMGIERLAMLKHGISDIRLFCENDLRFLQQFS.

A Mg(2+)-binding site is contributed by E256.

The protein belongs to the class-II aminoacyl-tRNA synthetase family. Phe-tRNA synthetase alpha subunit type 1 subfamily. As to quaternary structure, tetramer of two alpha and two beta subunits. Mg(2+) serves as cofactor.

Its subcellular location is the cytoplasm. The catalysed reaction is tRNA(Phe) + L-phenylalanine + ATP = L-phenylalanyl-tRNA(Phe) + AMP + diphosphate + H(+). The polypeptide is Phenylalanine--tRNA ligase alpha subunit (Chlamydia felis (strain Fe/C-56) (Chlamydophila felis)).